We begin with the raw amino-acid sequence, 954 residues long: Glycine dehydrogenase (decarboxylating) (954 aa).

The residue at position 702 (Lys702) is an N6-(pyridoxal phosphate)lysine.

This sequence belongs to the GcvP family. In terms of assembly, the glycine cleavage system is composed of four proteins: P, T, L and H. It depends on pyridoxal 5'-phosphate as a cofactor.

The enzyme catalyses N(6)-[(R)-lipoyl]-L-lysyl-[glycine-cleavage complex H protein] + glycine + H(+) = N(6)-[(R)-S(8)-aminomethyldihydrolipoyl]-L-lysyl-[glycine-cleavage complex H protein] + CO2. The glycine cleavage system catalyzes the degradation of glycine. The P protein binds the alpha-amino group of glycine through its pyridoxal phosphate cofactor; CO(2) is released and the remaining methylamine moiety is then transferred to the lipoamide cofactor of the H protein. This chain is Glycine dehydrogenase (decarboxylating), found in Xanthomonas euvesicatoria pv. vesicatoria (strain 85-10) (Xanthomonas campestris pv. vesicatoria).